Reading from the N-terminus, the 515-residue chain is Lysine--tRNA ligase (515 aa).

Positions 422 and 429 each coordinate Mg(2+).

It belongs to the class-II aminoacyl-tRNA synthetase family. Homodimer. Mg(2+) is required as a cofactor.

The protein localises to the cytoplasm. It carries out the reaction tRNA(Lys) + L-lysine + ATP = L-lysyl-tRNA(Lys) + AMP + diphosphate. The polypeptide is Lysine--tRNA ligase (Clostridium acetobutylicum (strain ATCC 824 / DSM 792 / JCM 1419 / IAM 19013 / LMG 5710 / NBRC 13948 / NRRL B-527 / VKM B-1787 / 2291 / W)).